Consider the following 415-residue polypeptide: ORC1-type DNA replication protein 2 (415 aa).

ATP contacts are provided by residues 69-73, Y215, and R227; that span reads TGKSV.

This sequence belongs to the CDC6/cdc18 family.

Its function is as follows. Involved in regulation of DNA replication. The sequence is that of ORC1-type DNA replication protein 2 (cdc6-2) from Sulfolobus acidocaldarius (strain ATCC 33909 / DSM 639 / JCM 8929 / NBRC 15157 / NCIMB 11770).